Consider the following 126-residue polypeptide: Glycine cleavage system H protein (126 aa).

The region spanning Thr23–Lys104 is the Lipoyl-binding domain. Lys64 carries the N6-lipoyllysine modification.

The protein belongs to the GcvH family. As to quaternary structure, the glycine cleavage system is composed of four proteins: P, T, L and H. It depends on (R)-lipoate as a cofactor.

The glycine cleavage system catalyzes the degradation of glycine. The H protein shuttles the methylamine group of glycine from the P protein to the T protein. The protein is Glycine cleavage system H protein of Paraburkholderia xenovorans (strain LB400).